A 185-amino-acid polypeptide reads, in one-letter code: RRM domain-containing protein ECU09_1470 (185 aa).

2 RRM domains span residues 8 to 87 (NQLA…YAKR) and 101 to 170 (KKVY…PAYE).

The polypeptide is RRM domain-containing protein ECU09_1470 (Encephalitozoon cuniculi (strain GB-M1) (Microsporidian parasite)).